The following is an 879-amino-acid chain: Alanine--tRNA ligase (879 aa).

Positions 566, 570, 668, and 672 each coordinate Zn(2+).

It belongs to the class-II aminoacyl-tRNA synthetase family. Zn(2+) serves as cofactor.

Its subcellular location is the cytoplasm. The catalysed reaction is tRNA(Ala) + L-alanine + ATP = L-alanyl-tRNA(Ala) + AMP + diphosphate. Functionally, catalyzes the attachment of alanine to tRNA(Ala) in a two-step reaction: alanine is first activated by ATP to form Ala-AMP and then transferred to the acceptor end of tRNA(Ala). Also edits incorrectly charged Ser-tRNA(Ala) and Gly-tRNA(Ala) via its editing domain. This chain is Alanine--tRNA ligase, found in Listeria monocytogenes serotype 4b (strain F2365).